Here is a 210-residue protein sequence, read N- to C-terminus: Riboflavin kinase (210 aa).

Residues 1-11 (MRPSNPRPPVT) show a composition bias toward pro residues. The tract at residues 1 to 24 (MRPSNPRPPVTGPDSGPEAPFPIR) is disordered. Residues Thr44 and Asn46 each coordinate Mg(2+). The active-site Nucleophile is Glu113.

The protein belongs to the flavokinase family. The cofactor is Zn(2+). Mg(2+) is required as a cofactor.

The catalysed reaction is riboflavin + ATP = FMN + ADP + H(+). It participates in cofactor biosynthesis; FMN biosynthesis; FMN from riboflavin (ATP route): step 1/1. Functionally, catalyzes the phosphorylation of riboflavin (vitamin B2) to form flavin mononucleotide (FMN) coenzyme. This is Riboflavin kinase (fmn1) from Emericella nidulans (strain FGSC A4 / ATCC 38163 / CBS 112.46 / NRRL 194 / M139) (Aspergillus nidulans).